The chain runs to 63 residues: Large ribosomal subunit protein bL35 (63 aa).

The disordered stretch occupies residues 24 to 44; sequence RAKAYRSHRATGKTTKQKRQL.

Belongs to the bacterial ribosomal protein bL35 family.

In Mycoplasma mycoides subsp. mycoides SC (strain CCUG 32753 / NCTC 10114 / PG1), this protein is Large ribosomal subunit protein bL35.